Here is a 378-residue protein sequence, read N- to C-terminus: Chaperone protein DnaJ 1 (378 aa).

Positions 4 to 68 (DYYGILGVDR…DKRRIVDMGG (65 aa)) constitute a J domain. Residues 129 to 211 (GVKKDLTLDT…CAGDGRVRAR (83 aa)) form a CR-type zinc finger. Cysteine 142, cysteine 145, cysteine 159, cysteine 162, cysteine 185, cysteine 188, cysteine 199, and cysteine 202 together coordinate Zn(2+). CXXCXGXG motif repeat units lie at residues 142 to 149 (CSKCHGSG), 159 to 166 (CGTCHGSG), 185 to 192 (CHTCNGTG), and 199 to 206 (CDECAGDG).

The protein belongs to the DnaJ family. In terms of assembly, homodimer. Zn(2+) is required as a cofactor.

Its subcellular location is the cytoplasm. Participates actively in the response to hyperosmotic and heat shock by preventing the aggregation of stress-denatured proteins and by disaggregating proteins, also in an autonomous, DnaK-independent fashion. Unfolded proteins bind initially to DnaJ; upon interaction with the DnaJ-bound protein, DnaK hydrolyzes its bound ATP, resulting in the formation of a stable complex. GrpE releases ADP from DnaK; ATP binding to DnaK triggers the release of the substrate protein, thus completing the reaction cycle. Several rounds of ATP-dependent interactions between DnaJ, DnaK and GrpE are required for fully efficient folding. Also involved, together with DnaK and GrpE, in the DNA replication of plasmids through activation of initiation proteins. This Corynebacterium efficiens (strain DSM 44549 / YS-314 / AJ 12310 / JCM 11189 / NBRC 100395) protein is Chaperone protein DnaJ 1.